The following is a 62-amino-acid chain: Small ribosomal subunit protein eS27 (62 aa).

Zn(2+) contacts are provided by C17, C20, C36, and C39. The C4-type zinc finger occupies 17–39 (CPDCENEQLVFEKATSVVECTVC).

Belongs to the eukaryotic ribosomal protein eS27 family. Part of the 30S ribosomal subunit. It depends on Zn(2+) as a cofactor.

The sequence is that of Small ribosomal subunit protein eS27 from Methanocorpusculum labreanum (strain ATCC 43576 / DSM 4855 / Z).